We begin with the raw amino-acid sequence, 288 residues long: Bifunctional protein FolD (288 aa).

Residues 166–168 (GAS) and I232 contribute to the NADP(+) site.

The protein belongs to the tetrahydrofolate dehydrogenase/cyclohydrolase family. Homodimer.

It catalyses the reaction (6R)-5,10-methylene-5,6,7,8-tetrahydrofolate + NADP(+) = (6R)-5,10-methenyltetrahydrofolate + NADPH. It carries out the reaction (6R)-5,10-methenyltetrahydrofolate + H2O = (6R)-10-formyltetrahydrofolate + H(+). It participates in one-carbon metabolism; tetrahydrofolate interconversion. Its function is as follows. Catalyzes the oxidation of 5,10-methylenetetrahydrofolate to 5,10-methenyltetrahydrofolate and then the hydrolysis of 5,10-methenyltetrahydrofolate to 10-formyltetrahydrofolate. The polypeptide is Bifunctional protein FolD (Escherichia coli O8 (strain IAI1)).